A 353-amino-acid polypeptide reads, in one-letter code: Photosystem II D2 protein (353 aa).

T2 is modified (N-acetylthreonine). Residue T2 is modified to Phosphothreonine. A helical transmembrane segment spans residues 41–61 (CAYFALGGWFTGTTFVTSWYT). Chlorophyll a is bound at residue H118. A helical membrane pass occupies residues 125–141 (GFMLRQFELARSVQLRP). Residues Q130 and N143 each coordinate pheophytin a. Residues 153–166 (VFVSVFLIYPLGQS) traverse the membrane as a helical segment. H198 is a binding site for chlorophyll a. Residues 208–228 (AALLCAIHGATVENTLFEDGD) traverse the membrane as a helical segment. A plastoquinone contacts are provided by H215 and F262. Fe cation is bound at residue H215. H269 is a Fe cation binding site. A helical membrane pass occupies residues 279–295 (GLWMSALGVVGLALNLR).

The protein belongs to the reaction center PufL/M/PsbA/D family. As to quaternary structure, PSII is composed of 1 copy each of membrane proteins PsbA, PsbB, PsbC, PsbD, PsbE, PsbF, PsbH, PsbI, PsbJ, PsbK, PsbL, PsbM, PsbT, PsbX, PsbY, PsbZ, Psb30/Ycf12, at least 3 peripheral proteins of the oxygen-evolving complex and a large number of cofactors. It forms dimeric complexes. It depends on The D1/D2 heterodimer binds P680, chlorophylls that are the primary electron donor of PSII, and subsequent electron acceptors. It shares a non-heme iron and each subunit binds pheophytin, quinone, additional chlorophylls, carotenoids and lipids. There is also a Cl(-1) ion associated with D1 and D2, which is required for oxygen evolution. The PSII complex binds additional chlorophylls, carotenoids and specific lipids. as a cofactor.

Its subcellular location is the plastid. It localises to the chloroplast thylakoid membrane. It carries out the reaction 2 a plastoquinone + 4 hnu + 2 H2O = 2 a plastoquinol + O2. Its function is as follows. Photosystem II (PSII) is a light-driven water:plastoquinone oxidoreductase that uses light energy to abstract electrons from H(2)O, generating O(2) and a proton gradient subsequently used for ATP formation. It consists of a core antenna complex that captures photons, and an electron transfer chain that converts photonic excitation into a charge separation. The D1/D2 (PsbA/PsbD) reaction center heterodimer binds P680, the primary electron donor of PSII as well as several subsequent electron acceptors. D2 is needed for assembly of a stable PSII complex. The polypeptide is Photosystem II D2 protein (Platanus occidentalis (Sycamore)).